The following is a 282-amino-acid chain: MKIVTTVQEMQHITKELRASGKSIGFVPTMGYLHEGHATLLRKAREENEIVVLSVFVNPLQFGPNEDLDRYPRDIDRDENVAKENGVDYLFYPSVEEMYPAEQTTTVEVVKRTDVLCGKQRPGHFAGVATVLMKLFNITLPTRAYFGMKDAQQVAVIEGFVADFNIPVIIVPVDIVREEDGLAKSSRNVYLSQKERKEAPHLYRSLCMAKERIEAGERNAEIITTLVKEYIETYTKGTVDYADLYAYPSLQVVDQIEGRIILAIAVKFENVRLIDNITLTVK.

30–37 (MGYLHEGH) contributes to the ATP binding site. The active-site Proton donor is the H37. Q61 lines the (R)-pantoate pocket. Residue Q61 participates in beta-alanine binding. 147–150 (GMKD) contacts ATP. Residue Q153 coordinates (R)-pantoate. ATP-binding positions include V176 and 184-187 (KSSR).

It belongs to the pantothenate synthetase family. Homodimer.

It is found in the cytoplasm. The catalysed reaction is (R)-pantoate + beta-alanine + ATP = (R)-pantothenate + AMP + diphosphate + H(+). It functions in the pathway cofactor biosynthesis; (R)-pantothenate biosynthesis; (R)-pantothenate from (R)-pantoate and beta-alanine: step 1/1. Its function is as follows. Catalyzes the condensation of pantoate with beta-alanine in an ATP-dependent reaction via a pantoyl-adenylate intermediate. In Bacillus anthracis (strain A0248), this protein is Pantothenate synthetase.